Reading from the N-terminus, the 174-residue chain is Large ribosomal subunit protein uL10 (174 aa).

Belongs to the universal ribosomal protein uL10 family. Part of the ribosomal stalk of the 50S ribosomal subunit. The N-terminus interacts with L11 and the large rRNA to form the base of the stalk. The C-terminus forms an elongated spine to which L12 dimers bind in a sequential fashion forming a multimeric L10(L12)X complex.

Functionally, forms part of the ribosomal stalk, playing a central role in the interaction of the ribosome with GTP-bound translation factors. This chain is Large ribosomal subunit protein uL10, found in Bordetella bronchiseptica (strain ATCC BAA-588 / NCTC 13252 / RB50) (Alcaligenes bronchisepticus).